Consider the following 79-residue polypeptide: Neurotoxin ShK-like1 (79 aa).

The first 25 residues, 1 to 25 (MSRKLLAVLMVCTFFLIAASMGTNA), serve as a signal peptide directing secretion. Residues 26–35 (LPFHEGIERR) constitute a propeptide that is removed on maturation. A ShKT domain is found at 39–78 (CVDKMPFVCMRKDIPAICKNRNHRSYAFIMDVCRKTCGQC). 3 disulfide bridges follow: Cys-39–Cys-78, Cys-47–Cys-71, and Cys-56–Cys-75.

Expressed in nematocytes (in planulae and primary polyps). Is localized predominantly in the body column nematocytes and not in the tentacles (in primary polyps).

The protein localises to the nematocyst. The protein resides in the secreted. Its function is as follows. Neurotoxin. In vivo, induces contraction paralysis followed by death (within 2 hours) on zebrafish larvae. Also induces body contraction in Nematostella 11-dpf polyps. The chain is Neurotoxin ShK-like1 from Nematostella vectensis (Starlet sea anemone).